The following is a 51-amino-acid chain: Suberization-associated anionic peroxidase 1 (51 aa).

H30 contributes to the heme binding site. T31 provides a ligand contact to Ca(2+).

This sequence belongs to the peroxidase family. Classical plant (class III) peroxidase subfamily. Heme b is required as a cofactor. Ca(2+) serves as cofactor.

Its subcellular location is the secreted. The enzyme catalyses 2 a phenolic donor + H2O2 = 2 a phenolic radical donor + 2 H2O. Functionally, removal of H(2)O(2), oxidation of toxic reductants, biosynthesis and degradation of lignin, suberization, auxin catabolism, response to environmental stresses such as wounding, pathogen attack and oxidative stress. These functions might be dependent on each isozyme/isoform in each plant tissue. In terms of biological role, suggested to catalyze the deposition of the aromatic residues of suberin on the cell wall and thus play a role in cell-suberization. In Capsicum annuum (Capsicum pepper), this protein is Suberization-associated anionic peroxidase 1.